We begin with the raw amino-acid sequence, 656 residues long: uncharacterized protein (656 aa).

2 disordered regions span residues 1 to 41 (MMAT…ESEG) and 60 to 88 (SNKV…HNLE). Residues 22 to 36 (SDSSDSGSDVSFFSV) show a composition bias toward low complexity. At S39 the chain carries Phosphoserine. Over residues 62–78 (KVEKDSDSEQRGRKKET) the composition is skewed to basic and acidic residues.

It is found in the cytoplasm. The protein resides in the mitochondrion. This is an uncharacterized protein from Saccharomyces cerevisiae (strain ATCC 204508 / S288c) (Baker's yeast).